Here is a 336-residue protein sequence, read N- to C-terminus: MAPLGDGAAAAAAAEPNLVVSFGEMLIDFVPDVAGVSLAESGGFVKAPGGAPANVACAISKLGGSSAFVGKFGDDEFGHMLVDILKKNGVNAEGCLFDEHARTALAFVTLKSNGEREFMFYRNPSADMLLTEAELNLDLIRRAKIFHYGSISLITEPCRSAHVAAMRAAKSAGILCSYDPNVRLPLWPSEDAARAGILSIWKEADFIKVSDDEVAFLTQGDANDEKNVLSLWFDGLKLLIVTDGEKGCRYFTKDFKGSVPGFSVNTVDTTGAGDAFVGSLLVNVAKDDSIFHNEEKLREALKFSNACGAICTTKKGAIPALPTVAVAQELISKAAN.

It belongs to the carbohydrate kinase PfkB family. As to expression, expressed in stem, sheaths, anthers, and panicles (at protein level).

The enzyme catalyses D-fructose + ATP = D-fructose 6-phosphate + ADP + H(+). It participates in glycan biosynthesis; starch biosynthesis. With respect to regulation, strongly inhibited at high fructose concentration. May play an important role in maintaining the flux of carbon towards starch formation in endosperm. May also be involved in a sugar-sensing pathway. The protein is Fructokinase-2 (FRK2) of Oryza sativa subsp. japonica (Rice).